Consider the following 426-residue polypeptide: 3-phosphoshikimate 1-carboxyvinyltransferase (426 aa).

3-phosphoshikimate is bound by residues Lys-22, Ser-23, and Arg-27. Lys-22 serves as a coordination point for phosphoenolpyruvate. Gly-96 and Arg-124 together coordinate phosphoenolpyruvate. 3-phosphoshikimate-binding residues include Ser-170, Ser-171, Gln-172, Ser-198, Asp-314, Asn-337, and Lys-341. Residue Gln-172 coordinates phosphoenolpyruvate. Catalysis depends on Asp-314, which acts as the Proton acceptor. Residues Arg-345, Arg-387, and Lys-412 each contribute to the phosphoenolpyruvate site.

Belongs to the EPSP synthase family. Monomer.

Its subcellular location is the cytoplasm. The enzyme catalyses 3-phosphoshikimate + phosphoenolpyruvate = 5-O-(1-carboxyvinyl)-3-phosphoshikimate + phosphate. Its pathway is metabolic intermediate biosynthesis; chorismate biosynthesis; chorismate from D-erythrose 4-phosphate and phosphoenolpyruvate: step 6/7. Catalyzes the transfer of the enolpyruvyl moiety of phosphoenolpyruvate (PEP) to the 5-hydroxyl of shikimate-3-phosphate (S3P) to produce enolpyruvyl shikimate-3-phosphate and inorganic phosphate. This chain is 3-phosphoshikimate 1-carboxyvinyltransferase, found in Aliivibrio fischeri (strain MJ11) (Vibrio fischeri).